We begin with the raw amino-acid sequence, 513 residues long: L-threonine dehydratase biosynthetic IlvA (513 aa).

At K63 the chain carries N6-(pyridoxal phosphate)lysine. Residues N90, 189–193 (GGGGL), and S316 contribute to the pyridoxal 5'-phosphate site. ACT-like domains are found at residues 340–411 (ALLA…DMSD) and 433–504 (RLYT…DVTK).

It belongs to the serine/threonine dehydratase family. As to quaternary structure, homotetramer. The cofactor is pyridoxal 5'-phosphate.

It carries out the reaction L-threonine = 2-oxobutanoate + NH4(+). It participates in amino-acid biosynthesis; L-isoleucine biosynthesis; 2-oxobutanoate from L-threonine: step 1/1. Catalyzes the anaerobic formation of alpha-ketobutyrate and ammonia from threonine in a two-step reaction. The first step involved a dehydration of threonine and a production of enamine intermediates (aminocrotonate), which tautomerizes to its imine form (iminobutyrate). Both intermediates are unstable and short-lived. The second step is the nonenzymatic hydrolysis of the enamine/imine intermediates to form 2-ketobutyrate and free ammonia. In the low water environment of the cell, the second step is accelerated by RidA. The sequence is that of L-threonine dehydratase biosynthetic IlvA (ilvA) from Haemophilus influenzae (strain ATCC 51907 / DSM 11121 / KW20 / Rd).